We begin with the raw amino-acid sequence, 463 residues long: Asparagine--tRNA ligase (463 aa).

Belongs to the class-II aminoacyl-tRNA synthetase family. In terms of assembly, homodimer.

The protein localises to the cytoplasm. It carries out the reaction tRNA(Asn) + L-asparagine + ATP = L-asparaginyl-tRNA(Asn) + AMP + diphosphate + H(+). This chain is Asparagine--tRNA ligase, found in Clostridium kluyveri (strain ATCC 8527 / DSM 555 / NBRC 12016 / NCIMB 10680 / K1).